The sequence spans 250 residues: Probable transcriptional regulatory protein Cpha266_0538 (250 aa).

Belongs to the TACO1 family.

It is found in the cytoplasm. This chain is Probable transcriptional regulatory protein Cpha266_0538, found in Chlorobium phaeobacteroides (strain DSM 266 / SMG 266 / 2430).